Reading from the N-terminus, the 134-residue chain is Small ribosomal subunit protein uS8c (134 aa).

It belongs to the universal ribosomal protein uS8 family. In terms of assembly, part of the 30S ribosomal subunit.

Its subcellular location is the plastid. The protein resides in the chloroplast. One of the primary rRNA binding proteins, it binds directly to 16S rRNA central domain where it helps coordinate assembly of the platform of the 30S subunit. The polypeptide is Small ribosomal subunit protein uS8c (rps8) (Populus alba (White poplar)).